The sequence spans 428 residues: uncharacterized protein (428 aa).

Position 68 (histidine 68) interacts with Zn(2+). The Proton acceptor role is filled by glutamate 71. 2 residues coordinate Zn(2+): histidine 72 and glutamate 143.

The protein belongs to the peptidase M16 family. It depends on Zn(2+) as a cofactor.

This is an uncharacterized protein from Bacillus subtilis (strain 168).